The following is a 610-amino-acid chain: Glutamine--fructose-6-phosphate aminotransferase [isomerizing] (610 aa).

The active-site Nucleophile; for GATase activity is the C2. The region spanning 2–219 (CGIVGATSER…EGDVADINRT (218 aa)) is the Glutamine amidotransferase type-2 domain. SIS domains are found at residues 287-427 (AADI…YRGM) and 459-600 (LAQD…VDQP). K605 (for Fru-6P isomerization activity) is an active-site residue.

In terms of assembly, homodimer.

The protein localises to the cytoplasm. It catalyses the reaction D-fructose 6-phosphate + L-glutamine = D-glucosamine 6-phosphate + L-glutamate. Its function is as follows. Catalyzes the first step in hexosamine metabolism, converting fructose-6P into glucosamine-6P using glutamine as a nitrogen source. This chain is Glutamine--fructose-6-phosphate aminotransferase [isomerizing], found in Idiomarina loihiensis (strain ATCC BAA-735 / DSM 15497 / L2-TR).